A 2273-amino-acid chain; its full sequence is Acetyl-CoA carboxylase, mitochondrial (2273 aa).

Residues 1-104 constitute a mitochondrion transit peptide; that stretch reads KGKTITHGQS…RGNIHKHTRL (104 aa). The region spanning 134-635 is the Biotin carboxylation domain; the sequence is VISKILIANN…STGWLDDLIL (502 aa). The 193-residue stretch at 292-484 folds into the ATP-grasp domain; it reads KTNFVSVPDD…LPATQLQIAM (193 aa). 332 to 337 is an ATP binding site; that stretch reads GGGGKG. The active site involves arginine 459. Residues 763–837 enclose the Biotinyl-binding domain; the sequence is LEAELNPTQV…EAGDVIAKLT (75 aa). Lysine 804 carries the N6-biotinyllysine modification. Residues 1532–1867 form the CoA carboxyltransferase N-terminal domain; that stretch reads PYSVKDWLQP…KRDMSPPLLE (336 aa). Residues 1532-2187 form a carboxyltransferase region; it reads PYSVKDWLQP…EGQVIKRLQK (656 aa). CoA-binding residues include arginine 1776, lysine 2080, and arginine 2082. A CoA carboxyltransferase C-terminal domain is found at 1871–2187; sequence RWDRDVDFKP…EGQVIKRLQK (317 aa).

Biotin serves as cofactor.

Its subcellular location is the mitochondrion. The enzyme catalyses hydrogencarbonate + acetyl-CoA + ATP = malonyl-CoA + ADP + phosphate + H(+). It carries out the reaction N(6)-biotinyl-L-lysyl-[protein] + hydrogencarbonate + ATP = N(6)-carboxybiotinyl-L-lysyl-[protein] + ADP + phosphate + H(+). Its pathway is lipid metabolism; malonyl-CoA biosynthesis; malonyl-CoA from acetyl-CoA: step 1/1. In terms of biological role, catalyzes the rate-limiting reaction in the mitochondrial fatty acid synthesis (FAS) type II pathway. Responsible for the production of the mitochondrial malonyl-CoA, used for the biosynthesis of the cofactor lipoic acid. This protein carries three functions: biotin carboxyl carrier protein, biotin carboxylase, and carboxyltransferase. The protein is Acetyl-CoA carboxylase, mitochondrial (HFA1) of Saccharomyces cerevisiae (strain Lalvin EC1118 / Prise de mousse) (Baker's yeast).